The primary structure comprises 204 residues: N-(5'-phosphoribosyl)anthranilate isomerase (204 aa).

This sequence belongs to the TrpF family.

The enzyme catalyses N-(5-phospho-beta-D-ribosyl)anthranilate = 1-(2-carboxyphenylamino)-1-deoxy-D-ribulose 5-phosphate. Its pathway is amino-acid biosynthesis; L-tryptophan biosynthesis; L-tryptophan from chorismate: step 3/5. This Bacillus cereus (strain G9842) protein is N-(5'-phosphoribosyl)anthranilate isomerase.